Consider the following 280-residue polypeptide: Pantothenate synthetase (280 aa).

32-39 (MGALHAGH) provides a ligand contact to ATP. H39 acts as the Proton donor in catalysis. A (R)-pantoate-binding site is contributed by Q63. Q63 contributes to the beta-alanine binding site. 149-152 (GEKD) is an ATP binding site. Q155 is a (R)-pantoate binding site. ATP is bound by residues V178 and 186–189 (MSSR).

Belongs to the pantothenate synthetase family. As to quaternary structure, homodimer.

It is found in the cytoplasm. The enzyme catalyses (R)-pantoate + beta-alanine + ATP = (R)-pantothenate + AMP + diphosphate + H(+). The protein operates within cofactor biosynthesis; (R)-pantothenate biosynthesis; (R)-pantothenate from (R)-pantoate and beta-alanine: step 1/1. In terms of biological role, catalyzes the condensation of pantoate with beta-alanine in an ATP-dependent reaction via a pantoyl-adenylate intermediate. This is Pantothenate synthetase from Ruegeria sp. (strain TM1040) (Silicibacter sp.).